The primary structure comprises 232 residues: Enolase-phosphatase E1 (232 aa).

The protein belongs to the HAD-like hydrolase superfamily. MasA/MtnC family. In terms of assembly, monomer. The cofactor is Mg(2+).

The catalysed reaction is 5-methylsulfanyl-2,3-dioxopentyl phosphate + H2O = 1,2-dihydroxy-5-(methylsulfanyl)pent-1-en-3-one + phosphate. The protein operates within amino-acid biosynthesis; L-methionine biosynthesis via salvage pathway; L-methionine from S-methyl-5-thio-alpha-D-ribose 1-phosphate: step 3/6. Its pathway is amino-acid biosynthesis; L-methionine biosynthesis via salvage pathway; L-methionine from S-methyl-5-thio-alpha-D-ribose 1-phosphate: step 4/6. In terms of biological role, bifunctional enzyme that catalyzes the enolization of 2,3-diketo-5-methylthiopentyl-1-phosphate (DK-MTP-1-P) into the intermediate 2-hydroxy-3-keto-5-methylthiopentenyl-1-phosphate (HK-MTPenyl-1-P), which is then dephosphorylated to form the acireductone 1,2-dihydroxy-3-keto-5-methylthiopentene (DHK-MTPene). The chain is Enolase-phosphatase E1 from Xylella fastidiosa (strain Temecula1 / ATCC 700964).